Reading from the N-terminus, the 876-residue chain is MASESGAEKGPPTTPAENGQPGVPIAAAVAADEQGMISVDIAGLFYQFSKTFILIFPVYVLGYFGLSFSWLLIALVLLLWWRRNKGNKNSRLYRALAFLETEEKSVKHHIASIDLPAWVHFPDIERAEWLNKTVKHMWPYICQFIEKLFRETIEPAVRGANAHLSTFSFTKIDMGSQPLRINGVKVYTENVDKRQIILDLQISFVGETEIDLEVKRYFCRAGVKSIQLHGTMRVILEPLIGDVPIVGALSIFFLRKPLLEINWTGLTNMLDMPGLNGLSDTIILDIISNYLVLPNRITVPLVSDVQIAQLRFPIPKGVLRIHFLEAQDLMWKDTYMKGLVKGKSDPYGVVRLGNQVFQSKVIKENLNPKWNEVYEALVHEHPGQELEIELFDEDTDKDDFLGSLLIDLVEVEKERVVDEWFTLDEATSGKLHLKLEWLTPKSTTENLDQVLKSIKADKDQANDGLSAALLILYLDSARSLPNNPLEINHDGMKKAAVEKAKKAGKKIGSSPNPYVLFSVGHTVQESKVKYKTAEPVWEQTFTFFVHNPKRQDLEVEVKDENHQNSMGNIKIPLSQILASEDLTLNQRFHLNNSGPNSSLKMKIALRILHVEKPVRSPDEQHTSQVKRPSIFKGKQPPTPQMPAPSPAVAHKPPPTPKLETNKKLENGNKSSTPSASPKRPTELHKSSSSLSGSSFTYSPPHLPTKEPTPSIASDISLPVATQELRERLRQLQNGTTLGQSPLGQIQLTIRHSSQRNKLMVVVHSCRNLIAFSEEGSDPYVRIYLLPDKRRSGRRKTHVHKRTLNPIYDQTFEFSVSLADLQRRTLDVAVKNGGGFLFREKGLLGKLLLEINTEDAAKGWTQWFDLTEDGTRAAASS.

Residues 1 to 21 (MASESGAEKGPPTTPAENGQP) are disordered. The Cytoplasmic portion of the chain corresponds to 1–35 (MASESGAEKGPPTTPAENGQPGVPIAAAVAADEQG). The helical transmembrane segment at 36–56 (MISVDIAGLFYQFSKTFILIF) threads the bilayer. At 57-59 (PVY) the chain is on the lumenal side. A helical transmembrane segment spans residues 60 to 80 (VLGYFGLSFSWLLIALVLLLW). The Cytoplasmic portion of the chain corresponds to 81-876 (WRRNKGNKNS…EDGTRAAASS (796 aa)). The 180-residue stretch at 123-302 (DIERAEWLNK…LPNRITVPLV (180 aa)) folds into the SMP-LTD domain. C2 domains lie at 301-421 (LVSD…DEWF) and 446-592 (NLDQ…HLNN). Lysine 332, aspartate 333, aspartate 345, aspartate 392, glutamate 393, aspartate 394, aspartate 396, aspartate 398, and aspartate 399 together coordinate Ca(2+). The segment at 614–714 (VRSPDEQHTS…KEPTPSIASD (101 aa)) is disordered. The span at 636-656 (PPTPQMPAPSPAVAHKPPPTP) shows a compositional bias: pro residues. Low complexity predominate over residues 686–698 (SSSSLSGSSFTYS). The region spanning 741–863 (PLGQIQLTIR…DAAKGWTQWF (123 aa)) is the C2 3 domain. Positions 788-795 (KRRSGRRK) are required for phosphatidylinositol 4,5-bisphosphate-dependent location at the cell membrane.

This sequence belongs to the extended synaptotagmin family. Interacts with fgfr1 that has been activated by fgf1 binding. Interacts (via C2 domains) with the AP-2 complex (via an alpha subunit). Identified in a complex with the AP-2 complex and fgfr1.

The protein localises to the cell membrane. It is found in the endoplasmic reticulum membrane. Tethers the endoplasmic reticulum to the cell membrane and promotes the formation of appositions between the endoplasmic reticulum and the cell membrane. Binds glycerophospholipids in a barrel-like domain and may play a role in cellular lipid transport. Plays a role in the rapid internalization of fgfr1 that has been activated by fgf1 binding; this occurs most likely via the AP-2 complex. Required for normal fgf signaling and the activation of downstream signaling cascades via its role in the internalization of activated fgfr1. Required for normal embryonic development via its role in fgf signaling and the downstream regulation of t/xBRA expression. In Xenopus laevis (African clawed frog), this protein is Extended synaptotagmin-2-B (esyt2-b).